We begin with the raw amino-acid sequence, 179 residues long: Large ribosomal subunit protein uL5 (179 aa).

Belongs to the universal ribosomal protein uL5 family. In terms of assembly, part of the 50S ribosomal subunit; part of the 5S rRNA/L5/L18/L25 subcomplex. Contacts the 5S rRNA and the P site tRNA. Forms a bridge to the 30S subunit in the 70S ribosome.

Functionally, this is one of the proteins that bind and probably mediate the attachment of the 5S RNA into the large ribosomal subunit, where it forms part of the central protuberance. In the 70S ribosome it contacts protein S13 of the 30S subunit (bridge B1b), connecting the 2 subunits; this bridge is implicated in subunit movement. Contacts the P site tRNA; the 5S rRNA and some of its associated proteins might help stabilize positioning of ribosome-bound tRNAs. In Citrobacter koseri (strain ATCC BAA-895 / CDC 4225-83 / SGSC4696), this protein is Large ribosomal subunit protein uL5.